Consider the following 220-residue polypeptide: Peptidyl-tRNA hydrolase (220 aa).

Residue Tyr14 coordinates tRNA. His19 acts as the Proton acceptor in catalysis. TRNA is bound by residues Phe66, Asn68, and Asn114. Residues Gln184 to Val220 are disordered.

It belongs to the PTH family. In terms of assembly, monomer.

The protein resides in the cytoplasm. It catalyses the reaction an N-acyl-L-alpha-aminoacyl-tRNA + H2O = an N-acyl-L-amino acid + a tRNA + H(+). In terms of biological role, hydrolyzes ribosome-free peptidyl-tRNAs (with 1 or more amino acids incorporated), which drop off the ribosome during protein synthesis, or as a result of ribosome stalling. Catalyzes the release of premature peptidyl moieties from peptidyl-tRNA molecules trapped in stalled 50S ribosomal subunits, and thus maintains levels of free tRNAs and 50S ribosomes. The protein is Peptidyl-tRNA hydrolase of Deinococcus deserti (strain DSM 17065 / CIP 109153 / LMG 22923 / VCD115).